A 113-amino-acid chain; its full sequence is Na(+)/H(+) antiporter subunit C (113 aa).

3 helical membrane passes run 4 to 21 (LMAVLAGIIFMAATYLLL), 28 to 47 (VIIGTALLSHGVHLMLLTMG), and 67 to 89 (PLPQALILTAIVISFGVTSFILV).

The protein belongs to the CPA3 antiporters (TC 2.A.63) subunit C family. Forms a heterooligomeric complex that consists of seven subunits: MrpA, MrpB, MrpC, MrpD, MrpE, MrpF and MrpG.

It localises to the cell membrane. Mrp complex is a Na(+)/H(+) antiporter that is considered to be the major Na(+) excretion system in B.subtilis. Has a major role in Na(+) resistance and a minor role in Na(+)- and K(+)-dependent pH homeostasis as compared to TetB. MrpA may be the actual Na(+)/H(+) antiporter, although the six other Mrp proteins are all required for Na(+)/H(+) antiport activity and Na(+) resistance. MrpA is required for initiation of sporulation when external Na(+) concentration increases. Also transports Li(+) but not K(+), Ca(2+) or Mg(2+). This chain is Na(+)/H(+) antiporter subunit C (mrpC), found in Bacillus subtilis (strain 168).